Here is a 308-residue protein sequence, read N- to C-terminus: MMKSTNRSSLILSSNKFVCNNITNGKPMNIPVKNHNKYSSEPVSRSWGQIYSNNIDRYNLHNSKLSKKKYNKSPYYSDTYYVNYDNNDFNNRPYDAIKNCKSAGIIPYTFKNGELYFLFQRAEDPQRKKDSGWNDFGGKQLNSSETTADIAAREFSEETSCLFYLLEKLSIESNNNNNNNIKFKDLYDLLKNNDDLFYSRETIVNLKKLIIESKKFYSDKITEYVLPIFLSSKETYISYFVRVKYIPESDLPKAEDFHIPYEDRYLRECRWFSLDDLMNLNEKDFHKRLQITRIQQRIAKYYEKGLFS.

This is an uncharacterized protein from Acanthamoeba polyphaga (Amoeba).